We begin with the raw amino-acid sequence, 210 residues long: CASP-like protein 3A1 (210 aa).

The Cytoplasmic segment spans residues 1–44; the sequence is MNGLKTPPEIGIQLPEAKVAAETGTMSGPLVPPRSDRSVRRGTD. A helical transmembrane segment spans residues 45-65; that stretch reads VAHVVLRFVCLLTSVIALSLM. Over 66-94 the chain is Extracellular; it reads ATAKEAASISIYGFLLPVSSKWSFSDSFE. A helical membrane pass occupies residues 95 to 115; the sequence is YLVGVSAAVAAHALLQLIISV. Topologically, residues 116–130 are cytoplasmic; the sequence is SRLLRKSPVIPSRNH. The helical transmembrane segment at 131–151 threads the bilayer; it reads AWLIFAGDQAFAYAMLSAGSA. Over 152–185 the chain is Extracellular; the sequence is ASGVTNLNRTGIRHSPLPNFCKPLRSFCDHVAAS. An N-linked (GlcNAc...) asparagine glycan is attached at Asn159. The helical transmembrane segment at 186 to 206 threads the bilayer; sequence IAFTFFSCFLLATSAILDVIW. Over 207–210 the chain is Cytoplasmic; that stretch reads LSKY.

The protein belongs to the Casparian strip membrane proteins (CASP) family. In terms of assembly, homodimer and heterodimers.

The protein localises to the cell membrane. The sequence is that of CASP-like protein 3A1 from Vitis vinifera (Grape).